Consider the following 475-residue polypeptide: Ribulose bisphosphate carboxylase large chain (475 aa).

Positions M1–S2 are excised as a propeptide. The residue at position 3 (P3) is an N-acetylproline. At K14 the chain carries N6,N6,N6-trimethyllysine. Residues N123 and T173 each contribute to the substrate site. K175 serves as the catalytic Proton acceptor. Substrate is bound at residue K177. Mg(2+) contacts are provided by K201, D203, and E204. Position 201 is an N6-carboxylysine (K201). H294 acts as the Proton acceptor in catalysis. Residues R295, H327, and S379 each coordinate substrate.

This sequence belongs to the RuBisCO large chain family. Type I subfamily. As to quaternary structure, heterohexadecamer of 8 large chains and 8 small chains; disulfide-linked. The disulfide link is formed within the large subunit homodimers. It depends on Mg(2+) as a cofactor. The disulfide bond which can form in the large chain dimeric partners within the hexadecamer appears to be associated with oxidative stress and protein turnover.

Its subcellular location is the plastid. It localises to the chloroplast. It catalyses the reaction 2 (2R)-3-phosphoglycerate + 2 H(+) = D-ribulose 1,5-bisphosphate + CO2 + H2O. The enzyme catalyses D-ribulose 1,5-bisphosphate + O2 = 2-phosphoglycolate + (2R)-3-phosphoglycerate + 2 H(+). Functionally, ruBisCO catalyzes two reactions: the carboxylation of D-ribulose 1,5-bisphosphate, the primary event in carbon dioxide fixation, as well as the oxidative fragmentation of the pentose substrate in the photorespiration process. Both reactions occur simultaneously and in competition at the same active site. The sequence is that of Ribulose bisphosphate carboxylase large chain from Cerastium glomeratum (Sticky chickweed).